The primary structure comprises 156 residues: Putative HTH-type transcriptional regulator BadM (156 aa).

The HTH rrf2-type domain maps to 4-130 (RLQKSTMCGL…RSVSITSLLK (127 aa)). The segment at 136–156 (RRKTERGPNGASARHSSAGRA) is disordered. Residues 145 to 156 (GASARHSSAGRA) are compositionally biased toward low complexity.

This chain is Putative HTH-type transcriptional regulator BadM (badM), found in Rhodopseudomonas palustris (strain ATCC BAA-98 / CGA009).